Reading from the N-terminus, the 473-residue chain is Serine/threonine-protein phosphatase T (473 aa).

TPR repeat units follow at residues 5–38 (ALEL…DSTN), 40–72 (ILYS…DPEY), and 73–106 (AKAY…APSD). Positions 159–472 (KQITKEFVED…MAYANGLLSG (314 aa)) are catalytic. Mn(2+) is bound by residues D217, H219, D246, and N278. H279 (proton donor/acceptor) is an active-site residue. Residues H327 and H404 each coordinate Mn(2+).

It belongs to the PPP phosphatase family. PP-5 (PP-T) subfamily. The cofactor is Mg(2+). It depends on Mn(2+) as a cofactor.

It localises to the nucleus. The catalysed reaction is O-phospho-L-seryl-[protein] + H2O = L-seryl-[protein] + phosphate. The enzyme catalyses O-phospho-L-threonyl-[protein] + H2O = L-threonyl-[protein] + phosphate. Its function is as follows. Protein phosphatase that specifically binds to and dephosphorylates the molecular chaperone Hsp90. Dephosphorylation positively regulates the Hsp90 chaperone machinery. The chain is Serine/threonine-protein phosphatase T (ppt1) from Schizosaccharomyces pombe (strain 972 / ATCC 24843) (Fission yeast).